The chain runs to 527 residues: GMP synthase [glutamine-hydrolyzing] (527 aa).

A Glutamine amidotransferase type-1 domain is found at 19–212 (KIIVLDYGSQ…AFSICGAKGD (194 aa)). Cys-96 serves as the catalytic Nucleophile. Catalysis depends on residues His-186 and Glu-188. One can recognise a GMPS ATP-PPase domain in the interval 213–402 (WSMANFVDMQ…LGMPDEVVWR (190 aa)). Residue 240–246 (SGGVDSS) coordinates ATP.

As to quaternary structure, homodimer.

The catalysed reaction is XMP + L-glutamine + ATP + H2O = GMP + L-glutamate + AMP + diphosphate + 2 H(+). It functions in the pathway purine metabolism; GMP biosynthesis; GMP from XMP (L-Gln route): step 1/1. Catalyzes the synthesis of GMP from XMP. In Streptococcus thermophilus (strain ATCC BAA-250 / LMG 18311), this protein is GMP synthase [glutamine-hydrolyzing].